A 308-amino-acid polypeptide reads, in one-letter code: tRNA dimethylallyltransferase (308 aa).

Residue 17–24 (GPTGSGKS) coordinates ATP. 19 to 24 (TGSGKS) is a binding site for substrate.

The protein belongs to the IPP transferase family. Monomer. Mg(2+) serves as cofactor.

The catalysed reaction is adenosine(37) in tRNA + dimethylallyl diphosphate = N(6)-dimethylallyladenosine(37) in tRNA + diphosphate. In terms of biological role, catalyzes the transfer of a dimethylallyl group onto the adenine at position 37 in tRNAs that read codons beginning with uridine, leading to the formation of N6-(dimethylallyl)adenosine (i(6)A). This Paenarthrobacter aurescens (strain TC1) protein is tRNA dimethylallyltransferase.